We begin with the raw amino-acid sequence, 218 residues long: UPF0173 metal-dependent hydrolase Mpal_1063 (218 aa).

It belongs to the UPF0173 family.

The polypeptide is UPF0173 metal-dependent hydrolase Mpal_1063 (Methanosphaerula palustris (strain ATCC BAA-1556 / DSM 19958 / E1-9c)).